Reading from the N-terminus, the 206-residue chain is Large ribosomal subunit protein uL4 (206 aa).

Positions 46 to 77 (GTRAQKDREQVKHSTKKPFKQKGTGNARAGMT) are disordered.

The protein belongs to the universal ribosomal protein uL4 family. As to quaternary structure, part of the 50S ribosomal subunit.

One of the primary rRNA binding proteins, this protein initially binds near the 5'-end of the 23S rRNA. It is important during the early stages of 50S assembly. It makes multiple contacts with different domains of the 23S rRNA in the assembled 50S subunit and ribosome. Functionally, forms part of the polypeptide exit tunnel. In Acidovorax ebreus (strain TPSY) (Diaphorobacter sp. (strain TPSY)), this protein is Large ribosomal subunit protein uL4.